We begin with the raw amino-acid sequence, 243 residues long: 7-cyano-7-deazaguanine synthase (243 aa).

Position 18–28 (18–28 (FSGGQDSATCL)) interacts with ATP. Residues cysteine 206, cysteine 221, cysteine 224, and cysteine 227 each coordinate Zn(2+).

The protein belongs to the QueC family. The cofactor is Zn(2+).

It catalyses the reaction 7-carboxy-7-deazaguanine + NH4(+) + ATP = 7-cyano-7-deazaguanine + ADP + phosphate + H2O + H(+). It functions in the pathway purine metabolism; 7-cyano-7-deazaguanine biosynthesis. In terms of biological role, catalyzes the ATP-dependent conversion of 7-carboxy-7-deazaguanine (CDG) to 7-cyano-7-deazaguanine (preQ(0)). This Methylorubrum extorquens (strain CM4 / NCIMB 13688) (Methylobacterium extorquens) protein is 7-cyano-7-deazaguanine synthase.